We begin with the raw amino-acid sequence, 859 residues long: Probable helicase A859L (859 aa).

A Helicase ATP-binding domain is found at 178 to 349; the sequence is YQELRRSGRA…KNRELFGGVA (172 aa). Residue 191–198 coordinates ATP; the sequence is MACRCGKT. A DEAH box motif is present at residues 298-301; sequence DECH. Residues 401–553 enclose the Helicase C-terminal domain; it reads HLKTNITAPK…RFYEHLLNPS (153 aa).

Belongs to the asfivirus helicase A859L family.

The chain is Probable helicase A859L from African swine fever virus (isolate Tick/South Africa/Pretoriuskop Pr4/1996) (ASFV).